The following is a 651-amino-acid chain: MPKIHQLSATLSNQIAAGEVIERPASVVKELVENSIDAQATQIDVLISAAGLQEIRVSDNGIGIAPDDVATAFLRHATSKILTTRDLFNVHSLGFRGEALASIAAVADVKLTTATDSGIGTQIHVKGGEVEAQSTAAHRRGTDVEVNDLFFNTPARLKYMKSQQTELGKIVDIVSRLAMANPDIAFTVSHDGNMVVRTAGQGDLRQTLAGIYGLSVARSMVDFKAQDLDFRVSGLTSLPETTRASRNYLSLVVNGRYIKNFQLTKAVIAGYGSKLMVGRYPMGVINIEMDAALVDVNVHPTKAEVRLSKEDQLSHLLSEAIRTRLAKENLIPDALDNLPKRERYDLDQLELTLNKISPKTMPSVQPQQGQQLRENTTTNLADTAAEEPTPAPTSPDLEIGDLDDQPIFNEPQRLAAWDQRYQRLASNVVPTLVADEPEPDISHVESAERFPNLTYLAQVHGTYLLAESGDGLYILDQHAAQERVNYEYYRQAIGEVSNDQQHLLVPIVLDYSAADAISIRDHRDVLESVGLYLEDFGQNSFVVEHHPTWFKAGQEEDTIKEMVDWVLRDGRMTVAAFREKTAIMMSCKRAIKANHHLDDRQARALLQKLPECENPFNCPHGRPVLVHFSNTDLEKMFKRIQDSHESGEMQA.

Residues 383-405 (TAAEEPTPAPTSPDLEIGDLDDQ) form a disordered region.

It belongs to the DNA mismatch repair MutL/HexB family.

Its function is as follows. This protein is involved in the repair of mismatches in DNA. It is required for dam-dependent methyl-directed DNA mismatch repair. May act as a 'molecular matchmaker', a protein that promotes the formation of a stable complex between two or more DNA-binding proteins in an ATP-dependent manner without itself being part of a final effector complex. This is DNA mismatch repair protein MutL from Lacticaseibacillus paracasei (strain ATCC 334 / BCRC 17002 / CCUG 31169 / CIP 107868 / KCTC 3260 / NRRL B-441) (Lactobacillus paracasei).